Reading from the N-terminus, the 62-residue chain is Delta-theraphotoxin-Cg1a 1 (62 aa).

The N-terminal stretch at 1-21 is a signal peptide; it reads MKTSILFVIFSLALLFALSAA. Positions 22–29 are excised as a propeptide; the sequence is TEIEETDR. 3 disulfide bridges follow: cysteine 31-cysteine 46, cysteine 38-cysteine 51, and cysteine 45-cysteine 58.

This sequence belongs to the neurotoxin 10 (Hwtx-1) family. 33 (Jztx-1) subfamily. In terms of tissue distribution, expressed by the venom gland.

The protein localises to the secreted. In terms of biological role, inhibits voltage-gated sodium channels, preferentially subtype Nav1.5/SCN5A (in cardiac myocytes), but also Nav1.6/SCN8A and Nav1.7/SCN9A (TTX-sensitive Nav in rat DRG neurons) and invertebrate Nav (in insect neurons) as well as voltage-gated potassium channels of the subtype Kv2.1/KCNB1. Is suggested to bind to site 3 of the sodium channels and inhibit the inactivation of the activated channels, thereby blocking neuronal transmission. On potassium channels, inhibits activation of channels with an IC(50) of 8.05 uM through a voltage sensor-trapping mechanism. Increases muscle contraction in several assays (mouse phrenic nerve-diaphragm, toad heart, rat vas deferens) and is suggested to act both presynaptically and postsynaptically. Its function is as follows. Moderately inhibits voltage-gated sodium channels and weakly inhibits voltage-gated potassium channel. Inhibits the inactivation of rat Nav1.2/SCN2A (IC(50)=870 nM), rat Nav1.3/SCN3A (IC(50)=845 nM), rat Nav1.4/SCN4A (IC(50)=339 nM), human Nav1.5/SCN5A (IC(50)=335 nM) and human Nav1.7/SCN9A sodium channels (IC(50)=348 nM). The toxin delays the inactivation of sodium channels without affecting the activation and steady-state inactivation kinetics in the physiological range of voltages. Site-directed mutagenesis of the sodium channel indicates that the toxin interacts with site 3 located at the extracellular S3-S4 linker of domain IV. On potassium channels, it inhibits activation of channels with an IC(50) of 8.05 uM through a voltage sensor-trapping mechanism. It increases muscle contraction in several assays (mouse phrenic nerve-diaphragm, toad heart, rat vas deferens) and is suggested to act both presynaptically and postsynaptically. In Chilobrachys guangxiensis (Chinese earth tiger tarantula), this protein is Delta-theraphotoxin-Cg1a 1.